Consider the following 227-residue polypeptide: Abasic site processing protein YoaM (227 aa).

Cysteine 2 serves as the catalytic Nucleophile. The residue at position 2 (cysteine 2) is a Thiazolidine linkage to a ring-opened DNA abasic site. Residue glutamate 106 is part of the active site.

Belongs to the SOS response-associated peptidase family.

With respect to regulation, formation and reversal of DNA-protein cross-link depends on DNA context. Catalyzes formation of the thiazolidine linkage in presence of abasic sites in single-stranded DNA. Mediates the reversal of the thiazolidine cross-link in presence of double stranded DNA. Functionally, sensor of abasic sites in single-stranded DNA (ssDNA) required to preserve genome integrity by promoting error-free repair of abasic sites. Recognizes and binds abasic sites in ssDNA at replication forks and chemically modifies the lesion by forming a covalent cross-link with DNA: forms a stable thiazolidine linkage between a ring-opened abasic site and the alpha-amino and sulfhydryl substituents of its N-terminal catalytic cysteine residue. The DNA-protein cross-link is then reversed: able to catalyze the reversal of the thiazolidine cross-link and cycle between a cross-link and a non-cross-linked state depending on DNA context: mediates self-reversal of the thiazolidine cross-link in double stranded DNA. May act as a protease: mediates autocatalytic processing of its N-terminal methionine in order to expose the catalytic cysteine. This is Abasic site processing protein YoaM (yoaM) from Bacillus subtilis (strain 168).